The primary structure comprises 374 residues: Arf-GAP with dual PH domain-containing protein 1 (374 aa).

One can recognise an Arf-GAP domain in the interval 7-126; it reads RAVLELLQRP…EFIYPEKQEP (120 aa). Residues 21 to 44 form a C4-type zinc finger; that stretch reads CADCGAPDPDWASYTLGVFICLSC. Position 87 is a phosphoserine; by PKC (Ser-87). 2 consecutive PH domains span residues 129-230 and 252-356; these read AGYR…AARF and NYLK…KAVD. Lys-272 is subject to N6-acetyllysine. Thr-276 carries the post-translational modification Phosphothreonine; by PKC.

As to quaternary structure, interacts with PRKCA, PRKCI and PRKCZ. Interacts with the N-terminal region of PRKD1. In terms of processing, phosphorylated by PRKCA, PRKCI, PRKCZ and PRKD1 in vitro. Expressed at highest levels in brain and at lower levels in peripheral blood leukocytes.

It localises to the nucleus. The protein localises to the cytoplasm. Its function is as follows. GTPase-activating protein for the ADP ribosylation factor family. Binds phosphatidylinositol 3,4,5-trisphosphate (PtdInsP3) and inositol 1,3,4,5-tetrakisphosphate (InsP4). Regulates the incorporation of CD63 and CD9 into multivesicular bodies. This chain is Arf-GAP with dual PH domain-containing protein 1 (ADAP1), found in Homo sapiens (Human).